We begin with the raw amino-acid sequence, 64 residues long: Large ribosomal subunit protein bL33 (64 aa).

Belongs to the bacterial ribosomal protein bL33 family.

In Rippkaea orientalis (strain PCC 8801 / RF-1) (Cyanothece sp. (strain PCC 8801)), this protein is Large ribosomal subunit protein bL33.